The following is a 660-amino-acid chain: U-box domain-containing protein 13 (660 aa).

The tract at residues 227–252 is disordered; sequence DDNGEEQKVGVNSRSNGQTSTAASQK. Polar residues predominate over residues 236-250; it reads GVNSRSNGQTSTAAS. Residues 255 to 329 form the U-box domain; sequence VIPDDFRCPI…AQWCEANDIE (75 aa). 5 ARM repeats span residues 384-423, 425-464, 466-505, 507-546, and 548-587; these read ADNR…NLSI, ENNK…SLSV, DENK…NLCI, QGNK…ILSS, and PEGK…HLCS. Residues 631-660 form a disordered region; that stretch reads AEQQKETAVSQPEEEAEPTHPESTTEAADT. Polar residues predominate over residues 651-660; sequence PESTTEAADT.

As to quaternary structure, binds to SD11, SD16, SD17, SD18, SD113, SD129 and SD25. In terms of processing, phosphorylated by SD1-6 and SD1-7.

The protein resides in the nucleus. Its subcellular location is the cytoplasm. The catalysed reaction is S-ubiquitinyl-[E2 ubiquitin-conjugating enzyme]-L-cysteine + [acceptor protein]-L-lysine = [E2 ubiquitin-conjugating enzyme]-L-cysteine + N(6)-ubiquitinyl-[acceptor protein]-L-lysine.. Its pathway is protein modification; protein ubiquitination. Functionally, functions as an E3 ubiquitin ligase. The chain is U-box domain-containing protein 13 (PUB13) from Arabidopsis thaliana (Mouse-ear cress).